The primary structure comprises 194 residues: Calcium channel flower (194 aa).

Transmembrane regions (helical) follow at residues 35–55 (LGIVAAFFAILFGLWNVFSII), 66–88 (IIQMVAGFVVMLLEALCCFVCFE), and 107–127 (GLYIAMAIPPIILCFGLASLF).

Belongs to the calcium channel flower family. Homomultimer. Associates with the dally/ magu complex.

Its subcellular location is the cell membrane. The protein localises to the cytoplasmic vesicle. The protein resides in the secretory vesicle. It localises to the synaptic vesicle membrane. It is found in the presynaptic cell membrane. Its subcellular location is the endosome. Channel activity is inhibited by La(3+), which reduces Ca(2+) influx and thus inhibits it's function in promoting activity-dependent bulk endocytosis (ADBE) in response to high stimuli. Transmembrane protein which mediates synaptic endocytosis, fitness-based cell culling, neuronal culling, morphogen gradient scaling, and calcium transport. Regulates synaptic endocytosis and hence couples exo- with endocytosis. Controls two major modes of synaptic vesicle (SV) endocytosis in the synaptic boutons of neuromuscular junctions (NMJs); Ca(2+) channel-independent Clathrin-mediated endocytosis (CME) in response to mild stimulation, and Ca(2+) channel-dependent activity-dependent bulk endocytosis (ADBE) in response to strong stimulation. Functions in ADBE and subsequent SV reformation from bulk endosomes by initiating Ca(2+) channel-dependent phosphatidylinositol 4,5-bisphosphate (PtdIns(4,5)P2) compartmentalization in synaptic boutons. There it acts at the periactive zone to provide the low Ca(2+) levels required to initiate Calcineurin activation and upregulate PtdIns(4,5)P2. Conversely PtdIns(4,5)P2 enhances fwe Ca(2+) channel-activity, establishing a positive feedback loop that induces PtdIns(4,5)P2 microdomain at the periactive zone. These microdomains trigger bulk membrane invagination (i.e. ADBE) by triggering actin polymerization while also promoting localization of fwe to bulk endosomes, thereby removing the ADBE trigger to reduce endocytosis and prevent excess membrane uptake. PtdIns(4,5)P2 then promotes SV reformation from the bulk endosomes, to coordinate ADBE and subsequent SV reformation. Different combinations of the flower isoforms at the cell membrane are also required for the identification and elimination of suboptimal or supernumerary cells during development, regeneration, and adulthood. Required for the recognition and elimination of unfit cells in the developing wing during cell competition. In the developing pupal retina, mediates the elimination of unwanted postmitotic neurons, including supernumerary photoreceptor neurons that form at the periphery of the retina and are contained within incomplete ommatidia units. Also required for efficient elimination and replacement of old neurons by newly generated neurons during regeneration in the adult brain following mechanical injury. Downstream of the flower fitness fingerprints, cells identified as unwanted or unfit are eliminated via apoptosis through the expression of ahuizotl (azot). However, the cells marked for elimination by the flower isoforms only undergo apoptosis if additional thresholds are met; (1) their neighboring fit/healthy cells express different levels of the fwe isoforms, and (2) the levels of the protective signal SPARC expressed by the loser or unwanted cells are unable to inhibit caspase activation. These additional thresholds for flower-mediated apoptosis, allows useful cells to recover from transient and limited stress before they are unnecessarily eliminated. Functions with dally and magu in a mechanism of scaling, which utilises apoptosis to ensure that the dpp morphogen gradient, which mediates organ growth, remains proportional to the size of the growing wing. In this mechanism, fwe represses dally- and Magu-dependent activity in expanding the gradient, and dally/Magu inhibits fwe-dependent apoptosis to keep cell death rate low. When the levels of these different proteins are optimally regulated the gradient correctly scales with organ growth but when this fails, fwe-mediated apoptosis is activated to trim the developing tissue to match the correct size of the gradient. The polypeptide is Calcium channel flower (Drosophila sechellia (Fruit fly)).